The chain runs to 262 residues: Acyl-[acyl-carrier-protein]--UDP-N-acetylglucosamine O-acyltransferase (262 aa).

This sequence belongs to the transferase hexapeptide repeat family. LpxA subfamily. In terms of assembly, homotrimer.

The protein resides in the cytoplasm. It catalyses the reaction a (3R)-hydroxyacyl-[ACP] + UDP-N-acetyl-alpha-D-glucosamine = a UDP-3-O-[(3R)-3-hydroxyacyl]-N-acetyl-alpha-D-glucosamine + holo-[ACP]. It functions in the pathway glycolipid biosynthesis; lipid IV(A) biosynthesis; lipid IV(A) from (3R)-3-hydroxytetradecanoyl-[acyl-carrier-protein] and UDP-N-acetyl-alpha-D-glucosamine: step 1/6. Its function is as follows. Involved in the biosynthesis of lipid A, a phosphorylated glycolipid that anchors the lipopolysaccharide to the outer membrane of the cell. This is Acyl-[acyl-carrier-protein]--UDP-N-acetylglucosamine O-acyltransferase from Campylobacter curvus (strain 525.92).